Here is a 464-residue protein sequence, read N- to C-terminus: tRNA modification GTPase MnmE (464 aa).

Residues Arg-27, Glu-90, and Lys-129 each coordinate (6S)-5-formyl-5,6,7,8-tetrahydrofolate. One can recognise a TrmE-type G domain in the interval 222–384 (GVTLVLAGSV…LYDRIRSFIA (163 aa)). GTP-binding positions include 232–237 (NVGKSS), 251–257 (SSYAGTT), and 276–279 (DTAG). A Mg(2+)-binding site is contributed by Ser-236. Ser-251 contacts K(+). Thr-257 contributes to the Mg(2+) binding site. (6S)-5-formyl-5,6,7,8-tetrahydrofolate is bound at residue Lys-464.

It belongs to the TRAFAC class TrmE-Era-EngA-EngB-Septin-like GTPase superfamily. TrmE GTPase family. In terms of assembly, homodimer. Heterotetramer of two MnmE and two MnmG subunits. K(+) is required as a cofactor.

It localises to the cytoplasm. In terms of biological role, exhibits a very high intrinsic GTPase hydrolysis rate. Involved in the addition of a carboxymethylaminomethyl (cmnm) group at the wobble position (U34) of certain tRNAs, forming tRNA-cmnm(5)s(2)U34. The chain is tRNA modification GTPase MnmE from Borrelia recurrentis (strain A1).